The sequence spans 224 residues: Glutathione S-transferase U1 (224 aa).

In terms of domain architecture, GST N-terminal spans 6–85 (ESVKLLGFWA…YIDQTWKNSP (80 aa)). Residues 16 to 17 (SP), 42 to 43 (NK), 56 to 57 (KV), and 69 to 70 (ES) each bind glutathione. The region spanning 90–217 (DPYEKAMARF…EKQIERMTKI (128 aa)) is the GST C-terminal domain. A Phosphothreonine modification is found at threonine 151.

This sequence belongs to the GST superfamily. Tau family.

Its subcellular location is the cytoplasm. It localises to the cytosol. It catalyses the reaction RX + glutathione = an S-substituted glutathione + a halide anion + H(+). May be involved in the conjugation of reduced glutathione to a wide number of exogenous and endogenous hydrophobic electrophiles and have a detoxification role against certain herbicides. This chain is Glutathione S-transferase U1 (GSTU1), found in Arabidopsis thaliana (Mouse-ear cress).